The chain runs to 357 residues: Phosphoserine aminotransferase (357 aa).

Residue Arg-41 participates in L-glutamate binding. Pyridoxal 5'-phosphate contacts are provided by residues 76–77, Trp-102, Thr-152, Asp-171, and Gln-194; that span reads GT. At Lys-195 the chain carries N6-(pyridoxal phosphate)lysine. Residue 235-236 coordinates pyridoxal 5'-phosphate; the sequence is NT.

This sequence belongs to the class-V pyridoxal-phosphate-dependent aminotransferase family. SerC subfamily. In terms of assembly, homodimer. Pyridoxal 5'-phosphate serves as cofactor.

The protein localises to the cytoplasm. It carries out the reaction O-phospho-L-serine + 2-oxoglutarate = 3-phosphooxypyruvate + L-glutamate. The enzyme catalyses 4-(phosphooxy)-L-threonine + 2-oxoglutarate = (R)-3-hydroxy-2-oxo-4-phosphooxybutanoate + L-glutamate. The protein operates within amino-acid biosynthesis; L-serine biosynthesis; L-serine from 3-phospho-D-glycerate: step 2/3. Catalyzes the reversible conversion of 3-phosphohydroxypyruvate to phosphoserine and of 3-hydroxy-2-oxo-4-phosphonooxybutanoate to phosphohydroxythreonine. This Limosilactobacillus fermentum (strain NBRC 3956 / LMG 18251) (Lactobacillus fermentum) protein is Phosphoserine aminotransferase.